The primary structure comprises 481 residues: 3-isopropylmalate dehydratase large subunit (481 aa).

[4Fe-4S] cluster is bound by residues Cys-363, Cys-423, and Cys-426. Residues Asp-432–His-459 are disordered.

Belongs to the aconitase/IPM isomerase family. LeuC type 1 subfamily. Heterodimer of LeuC and LeuD. Requires [4Fe-4S] cluster as cofactor.

It catalyses the reaction (2R,3S)-3-isopropylmalate = (2S)-2-isopropylmalate. It participates in amino-acid biosynthesis; L-leucine biosynthesis; L-leucine from 3-methyl-2-oxobutanoate: step 2/4. In terms of biological role, catalyzes the isomerization between 2-isopropylmalate and 3-isopropylmalate, via the formation of 2-isopropylmaleate. This is 3-isopropylmalate dehydratase large subunit from Corynebacterium glutamicum (strain R).